Consider the following 187-residue polypeptide: NADH-quinone oxidoreductase subunit B (187 aa).

[4Fe-4S] cluster is bound by residues C55, C56, C121, and C150.

The protein belongs to the complex I 20 kDa subunit family. As to quaternary structure, NDH-1 is composed of 14 different subunits. Subunits NuoB, C, D, E, F, and G constitute the peripheral sector of the complex. The cofactor is [4Fe-4S] cluster.

The protein resides in the cell inner membrane. The enzyme catalyses a quinone + NADH + 5 H(+)(in) = a quinol + NAD(+) + 4 H(+)(out). Its function is as follows. NDH-1 shuttles electrons from NADH, via FMN and iron-sulfur (Fe-S) centers, to quinones in the respiratory chain. The immediate electron acceptor for the enzyme in this species is believed to be ubiquinone. Couples the redox reaction to proton translocation (for every two electrons transferred, four hydrogen ions are translocated across the cytoplasmic membrane), and thus conserves the redox energy in a proton gradient. This is NADH-quinone oxidoreductase subunit B from Bdellovibrio bacteriovorus (strain ATCC 15356 / DSM 50701 / NCIMB 9529 / HD100).